The chain runs to 275 residues: Formamidopyrimidine-DNA glycosylase (275 aa).

Residue proline 2 is the Schiff-base intermediate with DNA of the active site. Glutamate 3 (proton donor) is an active-site residue. Lysine 59 serves as the catalytic Proton donor; for beta-elimination activity. The DNA site is built by histidine 92, arginine 111, and lysine 155. Residues 240–274 form an FPG-type zinc finger; sequence YVYGQTGEPCRRCGHEIEKMKLGGRGTHYCPHCQQ. The active-site Proton donor; for delta-elimination activity is the arginine 264.

This sequence belongs to the FPG family. As to quaternary structure, monomer. Requires Zn(2+) as cofactor.

The enzyme catalyses Hydrolysis of DNA containing ring-opened 7-methylguanine residues, releasing 2,6-diamino-4-hydroxy-5-(N-methyl)formamidopyrimidine.. It carries out the reaction 2'-deoxyribonucleotide-(2'-deoxyribose 5'-phosphate)-2'-deoxyribonucleotide-DNA = a 3'-end 2'-deoxyribonucleotide-(2,3-dehydro-2,3-deoxyribose 5'-phosphate)-DNA + a 5'-end 5'-phospho-2'-deoxyribonucleoside-DNA + H(+). Involved in base excision repair of DNA damaged by oxidation or by mutagenic agents. Acts as a DNA glycosylase that recognizes and removes damaged bases. Has a preference for oxidized purines, such as 7,8-dihydro-8-oxoguanine (8-oxoG). Has AP (apurinic/apyrimidinic) lyase activity and introduces nicks in the DNA strand. Cleaves the DNA backbone by beta-delta elimination to generate a single-strand break at the site of the removed base with both 3'- and 5'-phosphates. In Exiguobacterium sp. (strain ATCC BAA-1283 / AT1b), this protein is Formamidopyrimidine-DNA glycosylase.